Consider the following 332-residue polypeptide: Ferredoxin--NADP reductase 2 (332 aa).

FAD is bound by residues Asp-33, Gln-41, Tyr-46, Val-86, Ile-121, Asp-282, and Ser-325.

This sequence belongs to the ferredoxin--NADP reductase type 2 family. As to quaternary structure, homodimer. It depends on FAD as a cofactor.

It catalyses the reaction 2 reduced [2Fe-2S]-[ferredoxin] + NADP(+) + H(+) = 2 oxidized [2Fe-2S]-[ferredoxin] + NADPH. The polypeptide is Ferredoxin--NADP reductase 2 (Sulfolobus acidocaldarius (strain ATCC 33909 / DSM 639 / JCM 8929 / NBRC 15157 / NCIMB 11770)).